The chain runs to 268 residues: MLNNYNSLAQPMWQNGPAPGEFYNFTGGQTPVQQLPRELTTMGPYGTKHSTASSTTGTSVLGIRYDSGVMLAADTLVSYGSMARYQNIERVFKVNKNILLGGSGDFADIQSIKRNIDQKMIEDQCCDDNIEMKPKSLASWMTRVLYNRRSRMNPLYIDVVVGGVDNEGTPYLANVDLRGRSYEDYVVATGFARHLAVPLVREKKPKDRDFTAVEASELIRTCMEVLYYRDTRNISQYTVGVCSVNGCGVEGPFQVNENWTFAETIKGY.

It belongs to the peptidase T1B family. As to quaternary structure, the 26S proteasome consists of a 20S proteasome core and two 19S regulatory subunits. The 20S proteasome core is composed of 28 subunits that are arranged in four stacked rings, resulting in a barrel-shaped structure. The two end rings are each formed by seven alpha subunits, and the two central rings are each formed by seven beta subunits. The catalytic chamber with the active sites is on the inside of the barrel.

The protein resides in the cytoplasm. Its subcellular location is the nucleus. Non-catalytic component of the proteasome, a multicatalytic proteinase complex which is characterized by its ability to cleave peptides with Arg, Phe, Tyr, Leu, and Glu adjacent to the leaving group at neutral or slightly basic pH. The proteasome has an ATP-dependent proteolytic activity. The sequence is that of Proteasome subunit beta type-4 (Prosbeta7) from Drosophila melanogaster (Fruit fly).